The sequence spans 209 residues: uncharacterized protein (209 aa).

Residues S119 and H160 each act as charge relay system in the active site.

The protein belongs to the peptidase S51 family.

This is an uncharacterized protein from Listeria innocua serovar 6a (strain ATCC BAA-680 / CLIP 11262).